Here is a 462-residue protein sequence, read N- to C-terminus: 3-isopropylmalate dehydratase large subunit (462 aa).

3 residues coordinate [4Fe-4S] cluster: C337, C397, and C400.

Belongs to the aconitase/IPM isomerase family. LeuC type 1 subfamily. Heterodimer of LeuC and LeuD. It depends on [4Fe-4S] cluster as a cofactor.

It catalyses the reaction (2R,3S)-3-isopropylmalate = (2S)-2-isopropylmalate. It participates in amino-acid biosynthesis; L-leucine biosynthesis; L-leucine from 3-methyl-2-oxobutanoate: step 2/4. In terms of biological role, catalyzes the isomerization between 2-isopropylmalate and 3-isopropylmalate, via the formation of 2-isopropylmaleate. This chain is 3-isopropylmalate dehydratase large subunit, found in Listeria monocytogenes serovar 1/2a (strain ATCC BAA-679 / EGD-e).